We begin with the raw amino-acid sequence, 433 residues long: 3-phosphoshikimate 1-carboxyvinyltransferase (433 aa).

The 3-phosphoshikimate site is built by Lys-23, Ser-24, and Arg-28. Lys-23 serves as a coordination point for phosphoenolpyruvate. Residues Gly-95 and Arg-123 each contribute to the phosphoenolpyruvate site. Residues Ser-170, Ser-171, Gln-172, Ser-198, Asp-317, and Lys-344 each coordinate 3-phosphoshikimate. Gln-172 provides a ligand contact to phosphoenolpyruvate. The Proton acceptor role is filled by Asp-317. Positions 348, 391, and 416 each coordinate phosphoenolpyruvate.

It belongs to the EPSP synthase family. As to quaternary structure, monomer.

It localises to the cytoplasm. It carries out the reaction 3-phosphoshikimate + phosphoenolpyruvate = 5-O-(1-carboxyvinyl)-3-phosphoshikimate + phosphate. It functions in the pathway metabolic intermediate biosynthesis; chorismate biosynthesis; chorismate from D-erythrose 4-phosphate and phosphoenolpyruvate: step 6/7. In terms of biological role, catalyzes the transfer of the enolpyruvyl moiety of phosphoenolpyruvate (PEP) to the 5-hydroxyl of shikimate-3-phosphate (S3P) to produce enolpyruvyl shikimate-3-phosphate and inorganic phosphate. The polypeptide is 3-phosphoshikimate 1-carboxyvinyltransferase (Neisseria gonorrhoeae (strain NCCP11945)).